The following is an 849-amino-acid chain: MFDFSLEAIVYAKAITLLATVAVVMMWLFYYCYRLKQKNEVIFGTHHAAYIAYSVCIIAWISSNAYFHTDLLPELGASAGMFMAKFANLASFFAFAFAYYFSCQLAAEQRKGKVHRWQQGIFVSLTVYSLFINLRPGLTVEHVDIVGPSQFIIEFGPHTSYFFIGLVSFVVLTLVNLVAMRTNSSKLTLAKTNYMIAGILVFMLSTAVIHLGMTYFMGDFSLTWLPPALSISEMLFVGYALLTSRFYSVKYIAYLALSVLLVCAIFVLPLGAIFIPLTESNQWLIAIPICALIGITWQLLYKKTSRYASFLIYGDKKTPVQQILSLEEDFKLSIDDAMRRLGKLLQIPNDKLRLVTSNYNETFYEEYLSSNRSVLVFDELSEELEYKVSAKRSMKALYDKMSSNNTALVMPLFGQGKSVTHLLISPHKSNNQMFSNEEISAVQTLLTRVQSTIEADRRIRQSRALANSIAHEMRNPLAQVQLQFEALKQHIENHAPVEQITLDIENGQAAIQRGRQLIDIILREVSDSSPEHEPIAMTSIHKAVDQAVSHYGFENEKIIERIRLPQHTDFVAKLNETLFNFVIFNLIRNAIYYFDSYPDSQIEISTKTGPYENTLIFRDTGPGIDETISHKIFDDFFSYQKSGGSGLGLGYCQRVMRSFGGRIECKSKLGTFTEFHLYFPVVPNAPKADTLRTPYFNDWKQNKRSNEHKVAPNVQINNQSPTVLIVDDKEVQRALVQMYLNQLGVNSLQANNGENAVEVFKANHVDLILMDVQMPVMNGFDASQRIKELSPQTPIVALSGESGERELDMINKLMDGRLEKPTTLNALRHVLGNWLNKNTASSACEAERE.

The next 7 membrane-spanning stretches (helical) occupy residues 9 to 29 (IVYA…MWLF), 41 to 61 (VIFG…IAWI), 160 to 180 (SYFF…LVAM), 196 to 216 (IAGI…MTYF), 220 to 242 (FSLT…YALL), 251 to 275 (YIAY…AIFI), and 283 to 301 (WLIA…QLLY). The Histidine kinase domain occupies 468-683 (SIAHEMRNPL…EFHLYFPVVP (216 aa)). Phosphohistidine; by autocatalysis is present on H471. In terms of domain architecture, Response regulatory spans 722-835 (TVLIVDDKEV…ALRHVLGNWL (114 aa)). D771 carries the 4-aspartylphosphate modification.

The protein resides in the cell inner membrane. The enzyme catalyses ATP + protein L-histidine = ADP + protein N-phospho-L-histidine.. With respect to regulation, the phosphatase activity is constitutive and the kinase activity is regulated by the presence or absence of AI-1. At low cell density the kinase activity overrides the phosphatase activity. Functionally, at low cell density, in the absence of AI-1 (autoinducer 1), LuxN has a kinase activity and autophosphorylates on His-471. The phosphoryl group is then transferred on Asp-771 of the response regulator domain. The phosphoryl group is transferred to LuxU, and ultimately to LuxO. At high cell density, in the presence of AI-1, the kinase activity is inactivated, and the response regulator domain has a phosphatase activity. LuxN phosphatase acts on itself. As LuxU could function to establish an equilibrium between the aspartyl-phosphate of LuxN and the aspartyl-phosphate of LuxO, LuxU transfers phosphate from LuxO to LuxN and finally phosphate is drained from the system. In Vibrio campbellii (strain ATCC BAA-1116), this protein is Autoinducer 1 sensor kinase/phosphatase LuxN (luxN).